Reading from the N-terminus, the 849-residue chain is Glycogen phosphorylase (849 aa).

Residue lysine 679 is modified to N6-(pyridoxal phosphate)lysine.

The protein belongs to the glycogen phosphorylase family. The cofactor is pyridoxal 5'-phosphate.

The catalysed reaction is [(1-&gt;4)-alpha-D-glucosyl](n) + phosphate = [(1-&gt;4)-alpha-D-glucosyl](n-1) + alpha-D-glucose 1-phosphate. In terms of biological role, phosphorylase is an important allosteric enzyme in carbohydrate metabolism. Enzymes from different sources differ in their regulatory mechanisms and in their natural substrates. However, all known phosphorylases share catalytic and structural properties. The chain is Glycogen phosphorylase (glgP) from Synechocystis sp. (strain ATCC 27184 / PCC 6803 / Kazusa).